Consider the following 881-residue polypeptide: Heat shock protein 70 homolog LHS1 (881 aa).

An N-terminal signal peptide occupies residues 1-20 (MRNVLRLLFLTAFVAIGSLA). 7 N-linked (GlcNAc...) asparagine glycosylation sites follow: Asn-128, Asn-458, Asn-474, Asn-481, Asn-489, Asn-527, and Asn-844. Residues 833–844 (RKLEQEKSRNNN) show a composition bias toward basic and acidic residues. Residues 833–881 (RKLEQEKSRNNNETESTVINSADDKTTIVNDKTTESNPSSEEDILHDEL) are disordered. A compositionally biased stretch (polar residues) spans 859–871 (TIVNDKTTESNPS). Residues 872–881 (SEEDILHDEL) are compositionally biased toward acidic residues. The short motif at 878-881 (HDEL) is the Prevents secretion from ER element.

Belongs to the heat shock protein 70 family. Interacts with the heat shock protein 70 (HSP70) KAR2, and this stimulates nucleotide exchange on KAR2. KAR2 in turn acts to stimulate the ATPase activity of LHS1. In terms of processing, N-glycosylated.

Its subcellular location is the endoplasmic reticulum lumen. The enzyme catalyses ATP + H2O = ADP + phosphate + H(+). Chaperone required for protein translocation and folding in the endoplasmic reticulum. The polypeptide is Heat shock protein 70 homolog LHS1 (LHS1) (Saccharomyces cerevisiae (strain ATCC 204508 / S288c) (Baker's yeast)).